The sequence spans 244 residues: NAD(P)H-quinone oxidoreductase subunit K (244 aa).

The [4Fe-4S] cluster site is built by C60, C61, C125, and C156. Residues 213 to 244 (TSANSIPSSKKEKITELPDNNEKAEIIDTLEN) form a disordered region. The segment covering 221–238 (SKKEKITELPDNNEKAEI) has biased composition (basic and acidic residues).

This sequence belongs to the complex I 20 kDa subunit family. In terms of assembly, NDH-1 can be composed of about 15 different subunits; different subcomplexes with different compositions have been identified which probably have different functions. [4Fe-4S] cluster serves as cofactor.

The protein resides in the cellular thylakoid membrane. It catalyses the reaction a plastoquinone + NADH + (n+1) H(+)(in) = a plastoquinol + NAD(+) + n H(+)(out). The enzyme catalyses a plastoquinone + NADPH + (n+1) H(+)(in) = a plastoquinol + NADP(+) + n H(+)(out). NDH-1 shuttles electrons from an unknown electron donor, via FMN and iron-sulfur (Fe-S) centers, to quinones in the respiratory and/or the photosynthetic chain. The immediate electron acceptor for the enzyme in this species is believed to be plastoquinone. Couples the redox reaction to proton translocation, and thus conserves the redox energy in a proton gradient. Cyanobacterial NDH-1 also plays a role in inorganic carbon-concentration. The chain is NAD(P)H-quinone oxidoreductase subunit K from Prochlorococcus marinus (strain MIT 9301).